A 401-amino-acid polypeptide reads, in one-letter code: S-adenosylmethionine synthase (401 aa).

His-15 contacts ATP. Residue Asp-17 participates in Mg(2+) binding. Position 43 (Glu-43) interacts with K(+). Positions 56 and 99 each coordinate L-methionine. The segment at 99 to 109 (QSPEIGAGVDT) is flexible loop. The tract at residues 101-132 (PEIGAGVDTSHEVRGSSSTDEDDRQGAGDQGL) is disordered. Residues 174-176 (DGK), Asp-254, 260-261 (RK), Ala-277, and Lys-281 contribute to the ATP site. Residue Asp-254 participates in L-methionine binding. Lys-285 contributes to the L-methionine binding site.

Belongs to the AdoMet synthase family. Homotetramer; dimer of dimers. Requires Mg(2+) as cofactor. The cofactor is K(+).

It is found in the cytoplasm. It carries out the reaction L-methionine + ATP + H2O = S-adenosyl-L-methionine + phosphate + diphosphate. The protein operates within amino-acid biosynthesis; S-adenosyl-L-methionine biosynthesis; S-adenosyl-L-methionine from L-methionine: step 1/1. In terms of biological role, catalyzes the formation of S-adenosylmethionine (AdoMet) from methionine and ATP. The overall synthetic reaction is composed of two sequential steps, AdoMet formation and the subsequent tripolyphosphate hydrolysis which occurs prior to release of AdoMet from the enzyme. The protein is S-adenosylmethionine synthase of Corynebacterium urealyticum (strain ATCC 43042 / DSM 7109).